A 405-amino-acid polypeptide reads, in one-letter code: FAD-dependent monooxygenase thnD (405 aa).

The FAD site is built by Glu-30, Ala-45, Arg-106, Asp-308, and Gly-321.

It belongs to the paxM FAD-dependent monooxygenase family. It depends on FAD as a cofactor.

Its function is as follows. FAD-dependent monooxygenase; part of the gene cluster that produces the tetronate natural products trihazones. Transcription analysis of thnD confirmed this gene is expressed, hence its role in the biosynthetic pathway remains cryptic. The pathway begins with the formation of trihazone A by the hybrid PKS-NRPS synthetase thnA and the trans-enoyl reductase thnE. Trihazone A is further decarboxylated by the 2-oxoglutarate-dependent dioxygenase thnC to produce trihazone D. The function of the FAD-dependent monooxygenase thnD has still to be identified. The chain is FAD-dependent monooxygenase thnD from Trichoderma harzianum (Hypocrea lixii).